Reading from the N-terminus, the 287-residue chain is rRNA adenine N-6-methyltransferase (287 aa).

Residues 1–13 (MKKKNHKYRGKKL) show a composition bias toward basic residues. Residues 1-21 (MKKKNHKYRGKKLNRGESPNF) are disordered. Residues His-25, Met-27, Gly-52, Glu-73, Asp-98, and Asn-114 each coordinate S-adenosyl-L-methionine.

Belongs to the class I-like SAM-binding methyltransferase superfamily. rRNA adenine N(6)-methyltransferase family. As to quaternary structure, homodimer.

Involved in erythromycin resistance. The sequence is that of rRNA adenine N-6-methyltransferase (ermJ) from Bacillus anthracis.